The primary structure comprises 288 residues: MMVPRISASPVFKRIFLRWGFVTLPIQKTVSHTLRRDFSAPCRSMVKCLLLRPGISVHSAQDRKFYSTEEKSSQFDENKSKSNNGKKNEPHGIKGLMAKYGYSALIVYILLTCVDLPLCFLGVHSLGEEKIKIYLNRGKQLIGMGEPDESKVIQDVRRKQAHREAVQAENADKVEDASRKTFNERWQEMKDSTLLAELLIAYGIHKSLIIVRVPLTAVLTPSFVKLLQRFGIDLMKKQKKVFQTMASGAKIRYKGNNPSDFIKNEGTALDITKRKPRTKGQKWFDGLM.

Positions 68–90 (TEEKSSQFDENKSKSNNGKKNEP) are disordered.

As to quaternary structure, heterooligomeric.

The protein resides in the cytoplasm. Maybe involved in N-terminal acetylation of proteins. N-acetylation plays a role in normal eukaryotic translation and processing, protect against proteolytic degradation and protein turnover. The polypeptide is Putative N-terminal acetyltransferase 2 (NAT2) (Saccharomyces cerevisiae (strain ATCC 204508 / S288c) (Baker's yeast)).